Consider the following 471-residue polypeptide: E3 ubiquitin-protein ligase TRIM38 (471 aa).

Residues 16–62 form an RING-type zinc finger; sequence CSICKAMMSHPVSINCGHSYCKSCIQSYYCNVSPKTGWKMLGCPLCS. The B box-type zinc-finger motif lies at 90–131; the sequence is DQDMVCEEHEEKFNRFCEDDGQLLCWRCYWEDRHKGHTLAHV. Positions 95, 98, 117, and 123 each coordinate Zn(2+). The B30.2/SPRY domain maps to 276–471; the sequence is CNVSELYFDV…PLFLPAINNQ (196 aa).

In terms of assembly, interacts (via B30.2/SPRY domain) with TAB2 and TAB3.

Its subcellular location is the cytoplasm. The catalysed reaction is S-ubiquitinyl-[E2 ubiquitin-conjugating enzyme]-L-cysteine + [acceptor protein]-L-lysine = [E2 ubiquitin-conjugating enzyme]-L-cysteine + N(6)-ubiquitinyl-[acceptor protein]-L-lysine.. It functions in the pathway protein modification; protein ubiquitination. It participates in protein modification; protein sumoylation. Its function is as follows. E3 ubiquitin-protein and E3 SUMO-protein ligase that acts as a regulator of innate immunity. Acts as a negative regulator of type I interferon IFN-beta production by catalyzing 'Lys-48'-linked polyubiquitination of AZI2/NAP1, leading to its degradation. Mediates 'Lys-48'-linked polyubiquitination and proteasomal degradation of the critical TLR adapter TICAM1, inhibiting TLR3-mediated type I interferon signaling. Acts as a positive regulator of the cGAS-STING pathway by acting as a E3 SUMO-protein ligase: mediates sumoylation of CGAS and STING, preventing their degradation and thereby activating the innate immune response to DNA virus. Also acts as a negative regulator of NF-kappa-B signaling independently of its E3 protein ligase activity by promoting lysosome-dependent degradation of TAB2 and TAB3 adapters. The polypeptide is E3 ubiquitin-protein ligase TRIM38 (Mus musculus (Mouse)).